A 90-amino-acid polypeptide reads, in one-letter code: Conotoxin Rg9.1 (90 aa).

Residues 1-20 form the signal peptide; sequence MHLSLARSAVLILLLLFALG. Positions 21-60 are excised as a propeptide; it reads NFVGVQPGQITRDADHGINLRSLRKQMSRSPLVKGAFCGQ. 3 disulfide bridges follow: cysteine 58/cysteine 71, cysteine 62/cysteine 73, and cysteine 67/cysteine 80.

Belongs to the conotoxin P superfamily. Expressed by the venom duct.

The protein localises to the secreted. Its function is as follows. Probable neurotoxin that inhibits ion channels. The polypeptide is Conotoxin Rg9.1 (Conus regius (Crown cone)).